The sequence spans 651 residues: MSAKTYPVLKAAKAQALIDNDKYLKWYEESIEEPEKFWSKHGKRIDWFKPYTKAKNTSFKGKVPIKWFEDGLTNVSYNCIDRHLKTHGERTAIIWEGDNPYIDKRITYNQLYDNVCRLANVLKAHGVKKGDRVTIYMPMVPEATYAMLACSRIGAVHSVVFGGFSPEALAGRIVDCESTFVITCDEGVRGGKPVALKENTDVAIDIAAKQYVIVNKVLVVRRTGGKVGWAPGRDLWYHQEIAKVKPDCPPVKMKAEDPLFILYTSGSTGKPKGVLHTTGGYLVYAAMTHEYVFDYKDGEIFWCSADVGWVTGHSYIVYGPLANCATTVMFEGVPNFPDQGRFWEIIDKHKVNIFYTAPTAIRSLMGAGDDFVKRSSRSSLRLLGSVGEPINPEAWEWYYNVVGDQRCPIVDTWWQTETGGILISPLPGATDLKPGSATRPFFGVKPELVDNEGKVLEGAADGNLCLIDSWPGQARTIYGDHNRFVQTYFSTYKGKYFTGDGCRRDEDGYYWITGRVDDVLNVSGHRLGTAEVESALVSHHLVSEAAVVGYPHGIKGQGIYCYVTLMAGHEGNEELRQTLIKHVRSEIGPIASPDKVQFAPGLPKTRSGKIMRRILRKIAEDDFGALGDTSTLADPGVVDDLIANRQNKASA.

CoA is bound by residues Arg189–Lys192, Thr311, and Asn335. ATP-binding positions include Gly387–Pro389, Asp411–Thr416, Asp500, and Arg515. CoA is bound at residue Ser523. ATP is bound at residue Arg526. Positions 537, 539, and 542 each coordinate Mg(2+). Arg584 contacts CoA. Position 609 is an N6-acetyllysine (Lys609).

This sequence belongs to the ATP-dependent AMP-binding enzyme family. Mg(2+) is required as a cofactor. Post-translationally, acetylated. Deacetylation by the SIR2-homolog deacetylase activates the enzyme.

The catalysed reaction is acetate + ATP + CoA = acetyl-CoA + AMP + diphosphate. Functionally, catalyzes the conversion of acetate into acetyl-CoA (AcCoA), an essential intermediate at the junction of anabolic and catabolic pathways. AcsA undergoes a two-step reaction. In the first half reaction, AcsA combines acetate with ATP to form acetyl-adenylate (AcAMP) intermediate. In the second half reaction, it can then transfer the acetyl group from AcAMP to the sulfhydryl group of CoA, forming the product AcCoA. This is Acetyl-coenzyme A synthetase from Allorhizobium ampelinum (strain ATCC BAA-846 / DSM 112012 / S4) (Agrobacterium vitis (strain S4)).